We begin with the raw amino-acid sequence, 498 residues long: Glycerol kinase (498 aa).

Thr-12 provides a ligand contact to ADP. The ATP site is built by Thr-12, Thr-13, and Ser-14. Residue Thr-12 participates in sn-glycerol 3-phosphate binding. An ADP-binding site is contributed by Arg-16. Residues Arg-82, Glu-83, Tyr-134, and Asp-244 each contribute to the sn-glycerol 3-phosphate site. Arg-82, Glu-83, Tyr-134, Asp-244, and Gln-245 together coordinate glycerol. ADP-binding residues include Thr-266 and Gly-310. ATP is bound by residues Thr-266, Gly-310, Gln-314, and Gly-411. Gly-411 and Asn-415 together coordinate ADP.

This sequence belongs to the FGGY kinase family.

It catalyses the reaction glycerol + ATP = sn-glycerol 3-phosphate + ADP + H(+). It functions in the pathway polyol metabolism; glycerol degradation via glycerol kinase pathway; sn-glycerol 3-phosphate from glycerol: step 1/1. Inhibited by fructose 1,6-bisphosphate (FBP). Key enzyme in the regulation of glycerol uptake and metabolism. Catalyzes the phosphorylation of glycerol to yield sn-glycerol 3-phosphate. In Roseiflexus sp. (strain RS-1), this protein is Glycerol kinase.